Consider the following 371-residue polypeptide: MATPTEIAYNRAALIESLQFTFVMDEVGKHLSEVICGFGIVLNLLLIYVIFKRTPKHMRSYAVLLFNFAIFDLLTCVASLLACQKTIFSGLSLTYIFHGPCKYVSSSLCFFCHCFVCHAMAHSQWILLISFIYRYRVLVDGAPDTKKMIVIVSLFYAMSAVIFLFYFWDIGDTNDLKQIMYDLHPQYHYDDREIWGDIVVSGNTTVLTIPSLIAIFYMTMPCVPIYFIIHYFRDKTLSTLASNALSMSPATKASHQKLIMALSIQAAIPIFWLVASGIFTLAEFGIIDGPIPENITFRLMDCIPSSSPLVAFIFIAPYREGLLRIISKTGIYRKQENRVSSVVEKFNQPPKQPTNPAQQSANNDAAKTEKV.

The next 7 membrane-spanning stretches (helical) occupy residues 31–51, 62–82, 109–129, 148–168, 209–229, 267–287, and 295–315; these read LSEV…YVIF, AVLL…SLLA, CFFC…ILLI, MIVI…FYFW, IPSL…YFII, AIPI…FGII, and ITFR…FIFI. The tract at residues 344–371 is disordered; that stretch reads EKFNQPPKQPTNPAQQSANNDAAKTEKV. Over residues 354–365 the composition is skewed to polar residues; it reads TNPAQQSANNDA.

The protein belongs to the nematode receptor-like protein srd family.

It localises to the membrane. The polypeptide is Serpentine receptor class delta-1 (srd-1) (Caenorhabditis elegans).